Consider the following 37-residue polypeptide: Putative preoptic regulatory factor 1 (37 aa).

2 propeptides span residues Met-1 to Pro-7 and Phe-18 to Leu-37.

The protein belongs to the GnRH family. Preoptic area and testis.

It is found in the secreted. Functionally, precursor for a gonadotropin regulatory hormone (GNRH) related decapeptide. In Rattus norvegicus (Rat), this protein is Putative preoptic regulatory factor 1 (Porf1).